Reading from the N-terminus, the 115-residue chain is Large ribosomal subunit protein bL19 (115 aa).

Belongs to the bacterial ribosomal protein bL19 family.

Its function is as follows. This protein is located at the 30S-50S ribosomal subunit interface and may play a role in the structure and function of the aminoacyl-tRNA binding site. The polypeptide is Large ribosomal subunit protein bL19 (Bacillus velezensis (strain DSM 23117 / BGSC 10A6 / LMG 26770 / FZB42) (Bacillus amyloliquefaciens subsp. plantarum)).